Here is a 310-residue protein sequence, read N- to C-terminus: Acetaldehyde dehydrogenase 1 (310 aa).

12 to 15 (SGNI) is a binding site for NAD(+). C127 acts as the Acyl-thioester intermediate in catalysis. NAD(+)-binding positions include 163–171 (SAGPGTRAN) and N282.

It belongs to the acetaldehyde dehydrogenase family.

It catalyses the reaction acetaldehyde + NAD(+) + CoA = acetyl-CoA + NADH + H(+). This chain is Acetaldehyde dehydrogenase 1, found in Mycobacterium sp. (strain KMS).